The chain runs to 773 residues: FT-interacting protein 3 (773 aa).

Over residues 1–16 the composition is skewed to basic and acidic residues; the sequence is MQRPPPEDFSLKETRP. Residues 1 to 24 form a disordered region; that stretch reads MQRPPPEDFSLKETRPHLGGGKLS. C2 domains lie at 22-142, 181-305, and 345-471; these read KLSG…PQWY, VSGT…SRWY, and YSSD…THSY. Residues D55, D61, D108, D110, and D115 each contribute to the Ca(2+) site. Transmembrane regions (helical) follow at residues 574–594, 608–628, and 716–736; these read IMGV…ICNW, IILV…LFLI, and LFVL…FQVV.

This sequence belongs to the MCTP family. In terms of assembly, interacts with and regulates subcellular localization and trafficking of STM. The cofactor is Ca(2+). Accumulates in vascular tissues, leaf primordia and flowers. Highly expressed in roots meristems and in both vegetative and inflorescence shoot apical meristems (SAMs).

It is found in the endoplasmic reticulum membrane. The protein localises to the cytoplasm. The protein resides in the vesicle. Its subcellular location is the cell membrane. It localises to the endosome membrane. It is found in the golgi apparatus membrane. Functionally, required for proliferation and differentiation of shoot stem cells in the shoot apical meristem (SAM), thus determining the appropriate balance between the maintenance of shoot stem cells and their differentiation into other aboveground plant parts via the control of subcellular localization and intercellular trafficking of STM in the shoot apex. Prevents intracellular trafficking of STM to the plasma membrane in cells in the peripheral shoot meristem region thus facilitating STM recycling to the nucleus to maintain stem cells. May function as a signaling molecule by regulating the trafficking of other regulators. This Arabidopsis thaliana (Mouse-ear cress) protein is FT-interacting protein 3.